We begin with the raw amino-acid sequence, 364 residues long: Ribosomal RNA large subunit methyltransferase M (364 aa).

Residues Ser198, 231-234 (APGG), Asp250, Asp270, and Asp286 contribute to the S-adenosyl-L-methionine site. The Proton acceptor role is filled by Lys315.

This sequence belongs to the class I-like SAM-binding methyltransferase superfamily. RNA methyltransferase RlmE family. RlmM subfamily. Monomer.

The protein resides in the cytoplasm. It carries out the reaction cytidine(2498) in 23S rRNA + S-adenosyl-L-methionine = 2'-O-methylcytidine(2498) in 23S rRNA + S-adenosyl-L-homocysteine + H(+). In terms of biological role, catalyzes the 2'-O-methylation at nucleotide C2498 in 23S rRNA. This Thauera aminoaromatica protein is Ribosomal RNA large subunit methyltransferase M.